The following is a 97-amino-acid chain: Small ribosomal subunit protein uS17 (97 aa).

The segment at 1–20 (MSEATVNDNAAVKNEKGARK) is disordered.

It belongs to the universal ribosomal protein uS17 family. In terms of assembly, part of the 30S ribosomal subunit.

Its function is as follows. One of the primary rRNA binding proteins, it binds specifically to the 5'-end of 16S ribosomal RNA. The sequence is that of Small ribosomal subunit protein uS17 from Corynebacterium jeikeium (strain K411).